A 326-amino-acid chain; its full sequence is Palmitoyltransferase ERF2 (326 aa).

Residues 1–62 lie on the Cytoplasmic side of the membrane; it reads MKGNPSTHEV…RLRAVKTARP (62 aa). The chain crosses the membrane as a helical span at residues 63-83; it reads FSLVVLFLILSPMVLFSVFEA. At 84 to 90 the chain is on the lumenal side; the sequence is HRLWHTR. Residues 91–111 form a helical membrane-spanning segment; the sequence is YGYKALVVLFYYAWAWSLLSF. Over 112–202 the chain is Cytoplasmic; it reads TKTATSDPGV…NCVGQRNYRY (91 aa). A DHHC domain is found at 158–208; it reads KYCHTCKIWRPPRASHCSVCECCVLTHDHHCIWVNNCVGQRNYRYFLAFLL. Cysteine 188 acts as the S-palmitoyl cysteine intermediate in catalysis. Residues 203–223 form a helical membrane-spanning segment; that stretch reads FLAFLLSSTLACALLIANCAL. Residues 224 to 241 are Lumenal-facing; that stretch reads HLHRALHEGIRVSHRPLP. Residues 242–262 traverse the membrane as a helical segment; the sequence is VAVLLCVYAAVLCVYPVILLG. Residues 263–326 are Cytoplasmic-facing; it reads YHVAMSGTQQ…GPRSCNYRYR (64 aa).

It belongs to the DHHC palmitoyltransferase family. ERF2/ZDHHC9 subfamily. Interacts with ERF4. Post-translationally, autopalmitoylated.

The protein resides in the endoplasmic reticulum membrane. It carries out the reaction L-cysteinyl-[protein] + hexadecanoyl-CoA = S-hexadecanoyl-L-cysteinyl-[protein] + CoA. The ERF2-ERF4 complex is a palmitoyltransferase specific for Ras proteins. In Candida glabrata (strain ATCC 2001 / BCRC 20586 / JCM 3761 / NBRC 0622 / NRRL Y-65 / CBS 138) (Yeast), this protein is Palmitoyltransferase ERF2 (ERF2).